The sequence spans 261 residues: Probable septum site-determining protein MinC (261 aa).

This sequence belongs to the MinC family. As to quaternary structure, interacts with MinD and FtsZ.

Its function is as follows. Cell division inhibitor that blocks the formation of polar Z ring septums. Rapidly oscillates between the poles of the cell to destabilize FtsZ filaments that have formed before they mature into polar Z rings. Prevents FtsZ polymerization. This chain is Probable septum site-determining protein MinC, found in Burkholderia cenocepacia (strain ATCC BAA-245 / DSM 16553 / LMG 16656 / NCTC 13227 / J2315 / CF5610) (Burkholderia cepacia (strain J2315)).